Consider the following 396-residue polypeptide: F-box protein pof13 (396 aa).

Positions 40–89 (KNSNLFLLNRDIWSLIINYLDAFDILRLMHSSRQFYYWLRKSAVDECCFN) constitute an F-box domain.

As to quaternary structure, part of a SCF (SKP1-cullin-F-box) protein ligase complex. Interacts with skp1.

The protein localises to the cytoplasm. The protein operates within protein modification; protein ubiquitination. The polypeptide is F-box protein pof13 (pof13) (Schizosaccharomyces pombe (strain 972 / ATCC 24843) (Fission yeast)).